The chain runs to 150 residues: Ribosome maturation factor RimP (150 aa).

The protein belongs to the RimP family.

The protein resides in the cytoplasm. Its function is as follows. Required for maturation of 30S ribosomal subunits. In Thermotoga sp. (strain RQ2), this protein is Ribosome maturation factor RimP.